Reading from the N-terminus, the 67-residue chain is Large ribosomal subunit protein bL35 (67 aa).

The segment covering 1 to 16 has biased composition (basic residues); sequence MPKMKTKKSAAKRFRV. Residues 1-22 are disordered; it reads MPKMKTKKSAAKRFRVRPGGTV.

Belongs to the bacterial ribosomal protein bL35 family.

The chain is Large ribosomal subunit protein bL35 from Methylibium petroleiphilum (strain ATCC BAA-1232 / LMG 22953 / PM1).